A 164-amino-acid chain; its full sequence is HTH-type transcriptional regulator IscR (164 aa).

One can recognise an HTH rrf2-type domain in the interval 2–131 (RLTSKGRYAV…NNITLAELVN (130 aa)). Residues 28–51 (LADISERQGISLSYLEQLFSRLRK) constitute a DNA-binding region (H-T-H motif). Residues Cys92, Cys98, and Cys104 each coordinate [2Fe-2S] cluster. The disordered stretch occupies residues 143-164 (NNDTRRTANGRPQETINVNLRA). The segment covering 152–164 (GRPQETINVNLRA) has biased composition (polar residues).

The cofactor is [2Fe-2S] cluster.

In terms of biological role, regulates the transcription of several operons and genes involved in the biogenesis of Fe-S clusters and Fe-S-containing proteins. This Yersinia enterocolitica serotype O:8 / biotype 1B (strain NCTC 13174 / 8081) protein is HTH-type transcriptional regulator IscR.